Reading from the N-terminus, the 363-residue chain is Ethanolamine kinase 1 (363 aa).

Belongs to the choline/ethanolamine kinase family.

The protein resides in the cytoplasm. It catalyses the reaction ethanolamine + ATP = phosphoethanolamine + ADP + H(+). The protein operates within phospholipid metabolism; phosphatidylethanolamine biosynthesis; phosphatidylethanolamine from ethanolamine: step 1/3. Its function is as follows. Highly specific for ethanolamine phosphorylation. May be a rate-controlling step in phosphatidylethanolamine biosynthesis. The polypeptide is Ethanolamine kinase 1 (Etnk1) (Mus musculus (Mouse)).